Reading from the N-terminus, the 426-residue chain is Serine--tRNA ligase (426 aa).

An L-serine-binding site is contributed by 233–235 (TAE). 264–266 (RSE) is a binding site for ATP. Glu-287 contributes to the L-serine binding site. 351-354 (EISS) lines the ATP pocket. Ser-387 contacts L-serine.

This sequence belongs to the class-II aminoacyl-tRNA synthetase family. Type-1 seryl-tRNA synthetase subfamily. As to quaternary structure, homodimer. The tRNA molecule binds across the dimer.

It localises to the cytoplasm. The catalysed reaction is tRNA(Ser) + L-serine + ATP = L-seryl-tRNA(Ser) + AMP + diphosphate + H(+). It catalyses the reaction tRNA(Sec) + L-serine + ATP = L-seryl-tRNA(Sec) + AMP + diphosphate + H(+). The protein operates within aminoacyl-tRNA biosynthesis; selenocysteinyl-tRNA(Sec) biosynthesis; L-seryl-tRNA(Sec) from L-serine and tRNA(Sec): step 1/1. In terms of biological role, catalyzes the attachment of serine to tRNA(Ser). Is also able to aminoacylate tRNA(Sec) with serine, to form the misacylated tRNA L-seryl-tRNA(Sec), which will be further converted into selenocysteinyl-tRNA(Sec). The polypeptide is Serine--tRNA ligase (Clostridium botulinum (strain Langeland / NCTC 10281 / Type F)).